A 629-amino-acid polypeptide reads, in one-letter code: Dehydrogenase pyvF (629 aa).

An N-terminal signal peptide occupies residues 1 to 22 (MAGSPFTTALLSAWTLSTVAVG). Residues 61 to 62 (AS) and 82 to 83 (EA) contribute to the FAD site. N92 is a glycosylation site (N-linked (GlcNAc...) asparagine). Residue 144 to 147 (NLMA) participates in FAD binding. N-linked (GlcNAc...) asparagine glycans are attached at residues N172, N182, N256, N284, N312, and N421. H552 functions as the Proton acceptor in the catalytic mechanism. Residues A586 and 597–598 (PL) contribute to the FAD site.

The protein belongs to the GMC oxidoreductase family. As to quaternary structure, homodimer. FAD is required as a cofactor.

It functions in the pathway secondary metabolite biosynthesis. Functionally, dehydrogenase; part of the gene cluster that mediates the biosynthesis of pyranoviolin A, a pyranonigrin analog with a C-3 methoxy group. Initially, the PKS portion of pyvA synthesizes C-10 carbon chain from 5 molecules of malonyl-CoA, which is then condensed with the thiolation (T) domain-bound glycine activated by the adenylation (A) domain. The subsequent chain release by Dieckmann condensation (DKC) could be catalyzed by the TE domain present at the C-terminus of pyvA and/or the alpha/beta hydrolase pyvD, installing the tetramic acid moiety. The FAD-dependent monooxygenase pyvC next epoxidizes one of the olefins of the polyketide part, and the epoxide ring-opening induces the dihydro-gamma-pyrone ring formation. The cytochrome P450 monooxygeanse pyvB would be responsible for the 2 consecutive reactions, in which the dihydro-gamma-pyrone is oxidized to gamma-pyrone and C-7 is hydroxylated to yield pyranonigrin F. Finally, the O-methyltransferase pyvH methylates the C-3 hydroxy group to complete the biosynthesis. This Aspergillus violaceofuscus (strain CBS 115571) protein is Dehydrogenase pyvF.